An 87-amino-acid chain; its full sequence is Venom serine protease inhibitor (87 aa).

Residues 1–23 form the signal peptide; that stretch reads MPRLVLVSFLFLAIFSVFIGGFA. 5 disulfides stabilise this stretch: cysteine 27-cysteine 61, cysteine 36-cysteine 57, cysteine 40-cysteine 53, cysteine 44-cysteine 81, and cysteine 63-cysteine 75. In terms of domain architecture, TIL spans 27–81; the sequence is CPRNEIFTRCHAACQPSCARLARKPFCIKICKPGCICTSGYLRNKNNVCVPRSRC.

Belongs to the serine protease inhibitor-like (TIL domain-containing) family. As to expression, specifically expressed by the venom gland.

Its subcellular location is the secreted. Its function is as follows. Antifibrinolytic and antimicrobial serine protease inhibitor. Inhibits trypsin, plasmin and microbial serine proteases but not chymotrypsin, thrombin and elastase. Inhibits the plasmin-mediated degradation of fibrin to fibrin degradation products. Also binds to bacterial and fungal surfaces and exhibits antimicrobial activity against fungi as well as Gram-positive and Gram-negative bacteria. The polypeptide is Venom serine protease inhibitor (Apis cerana (Indian honeybee)).